The primary structure comprises 352 residues: Dysbindin (352 aa).

The residue at position 11 (Ser11) is a Phosphoserine. Positions 88–176 form a coiled coil; that stretch reads EKKRTSLNEL…EAFKAELDTE (89 aa). The interval 173–325 is dysbindin; the sequence is LDTEHTQKAL…DEEEVQVDTA (153 aa). Positions 243–256 match the Nuclear export signal motif; the sequence is LMDISDQEALDVFL. Positions 267-352 are disordered; that stretch reads SPGVEMESNP…SDQCDSTQDI (86 aa). The span at 274–285 shows a compositional bias: polar residues; it reads SNPNQNEMSLQI. The segment covering 286-301 has biased composition (low complexity); sequence PSPSESASQPPASPSA. Phosphoserine occurs at positions 315, 340, and 343.

It belongs to the dysbindin family. As to quaternary structure, interacts with AP3M1 and TRIM32. Interacts (isoform 1 and isoform 2 only) with the DNA-dependent protein kinase complex DNA-PK; the interaction phosphorylates DTNBP1 in vitro. Interacts directly in this complex with XRCC5 and XRCC6. Interacts with XPO1; the interaction exports DTNBP1 out of the nucleus. Component of the biogenesis of lysosome-related organelles complex 1 (BLOC-1) composed of BLOC1S1, BLOC1S2, BLOC1S3, BLOC1S4, BLOC1S5, BLOC1S6, DTNBP1/BLOC1S7 and SNAPIN/BLOC1S8. The BLOC-1 complex associates with the AP-3 protein complex and membrane protein cargos. This BLOC-1 complex also associates with the BLOC-2 complex in endosomes. Binds to DTNA and DTNB but may not be a physiological binding partner. Interacts (via its coiled coil domain) with KXD1. Interacts with AP3B2, BLOC1S5, BLOC1S6, CMYA5, PI4K2, RNF151 and SNAPIN/BLOC1S8. Interacts with XPO1; the interaction exports DTNBP1 out of the nucleus. Ubiquitinated by TRIM32. Ubiquitination leads to DTNBP1 degradation. In terms of tissue distribution, detected in brain, in hippocampus and dentate gyrus neurons. Detected at axon bundles and axon terminals, notably in the cerebellum and hippocampus. Detected in neuropil in hippocampus, lateral septum, basal ganglia and substantia nigra. Highly expressed in pyramidal cells of hippocampus CA2 and CA3. Detected at the heart and skeletal muscle sarcolemma (at protein level). Ubiquitously expressed. The highest expression is observed in testis, liver, kidney, brain, heart and lung. Expressed at lower levels in stomach and small intestine.

Its subcellular location is the cytoplasm. It is found in the cytoplasmic vesicle membrane. The protein resides in the endosome membrane. The protein localises to the melanosome membrane. It localises to the postsynaptic density. Its subcellular location is the endoplasmic reticulum. It is found in the nucleus. The protein resides in the cytoplasmic vesicle. The protein localises to the secretory vesicle. It localises to the synaptic vesicle membrane. Its subcellular location is the postsynaptic cell membrane. Component of the BLOC-1 complex, a complex that is required for normal biogenesis of lysosome-related organelles (LRO), such as platelet dense granules and melanosomes. In concert with the AP-3 complex, the BLOC-1 complex is required to target membrane protein cargos into vesicles assembled at cell bodies for delivery into neurites and nerve terminals. The BLOC-1 complex, in association with SNARE proteins, is also proposed to be involved in neurite extension. Associates with the BLOC-2 complex to facilitate the transport of TYRP1 independent of AP-3 function. Plays a role in synaptic vesicle trafficking and in neurotransmitter release. Plays a role in the regulation of cell surface exposure of DRD2. May play a role in actin cytoskeleton reorganization and neurite outgrowth. May modulate MAPK8 phosphorylation. Appears to promote neuronal transmission and viability through regulating the expression of SNAP25 and SYN1, modulating PI3-kinase-Akt signaling and influencing glutamatergic release. Regulates the expression of SYN1 through binding to its promoter. Modulates prefrontal cortical activity via the dopamine/D2 pathway. The chain is Dysbindin (Dtnbp1) from Mus musculus (Mouse).